Here is a 109-residue protein sequence, read N- to C-terminus: Small ribosomal subunit protein bS20 (109 aa).

Positions 1 to 26 (MANIKSAKKRAIQSEKRRKHNASRRS) are disordered.

This sequence belongs to the bacterial ribosomal protein bS20 family.

Binds directly to 16S ribosomal RNA. This is Small ribosomal subunit protein bS20 from Hamiltonella defensa subsp. Acyrthosiphon pisum (strain 5AT).